The primary structure comprises 1683 residues: Genome polyprotein (1683 aa).

Residues 1-445 are Extracellular-facing; sequence MRCIGISNRD…LHQVFGAIYG (445 aa). 4 cysteine pairs are disulfide-bonded: cysteine 3–cysteine 30, cysteine 60–cysteine 121, cysteine 74–cysteine 105, and cysteine 92–cysteine 116. Asparagine 67 is a glycosylation site (N-linked (GlcNAc...) asparagine; by host). Residues 98–111 form a fusion peptide region; sequence DRGWGNGCGLFGKG. N-linked (GlcNAc...) asparagine; by host glycosylation is present at asparagine 153. Disulfide bonds link cysteine 185–cysteine 285 and cysteine 302–cysteine 333. Residues 446–466 traverse the membrane as a helical segment; the sequence is AAFSGVSWTMKILIGVIITWI. The Cytoplasmic portion of the chain corresponds to 467 to 472; it reads GMNSRS. A helical transmembrane segment spans residues 473–493; the sequence is TSLSVSLVLVGIVTLYLGVMV. At 494–915 the chain is on the extracellular side; sequence QADSGCVVSW…MVGATMTDDI (422 aa). 6 cysteine pairs are disulfide-bonded: cysteine 499–cysteine 510, cysteine 550–cysteine 638, cysteine 674–cysteine 718, cysteine 775–cysteine 824, cysteine 786–cysteine 808, and cysteine 807–cysteine 811. Asparagine 702 carries an N-linked (GlcNAc...) asparagine; by host glycan. A helical transmembrane segment spans residues 916-940; the sequence is GMGVTYLALLAAFRVRPTFAAGLLL. The Cytoplasmic portion of the chain corresponds to 941–946; that stretch reads RKLTSK. Residues 947–965 traverse the membrane as a helical segment; sequence ELMMTTIGIVLLSQSSIPE. Topologically, residues 966–989 are lumenal; it reads TILELTDALALGMMVLKMVRNMEK. The helical transmembrane segment at 990-1010 threads the bilayer; sequence YQLAVTIMAILCVPNAVILQN. Position 1011 (alanine 1011) is a topological domain, cytoplasmic. A helical membrane pass occupies residues 1012 to 1030; it reads WKVSCTILAVVSVSPLLLT. The Lumenal portion of the chain corresponds to 1031–1037; sequence SSQQKAD. A helical transmembrane segment spans residues 1038-1058; it reads WIPLALTIKGLNPTAIFLTTL. The Cytoplasmic portion of the chain corresponds to 1059–1683; sequence SRTSKKRAGV…EFKEFAAGRK (625 aa). The 178-residue stretch at 1066–1243 folds into the Peptidase S7 domain; sequence AGVLWDVPSP…EKSIEDNPEI (178 aa). Residues histidine 1116, aspartate 1140, and serine 1200 each act as charge relay system; for serine protease NS3 activity in the active site. In terms of domain architecture, Helicase ATP-binding spans 1245 to 1401; that stretch reads DDIFRKRRLT…QSNAPIMDEE (157 aa). The tract at residues 1249-1252 is important for RNA-binding; sequence RKRR. Residue 1258–1265 coordinates ATP; the sequence is LHPGAGKT. The DEAH box motif lies at 1349–1352; the sequence is DEAH. One can recognise a Helicase C-terminal domain in the interval 1411–1582; the sequence is SGHEWVTDFK…IFEPEREKVD (172 aa).

As to quaternary structure, capsid protein C: Homodimer. Interacts (via N-terminus) with host EXOC1 (via C-terminus); this interaction results in EXOC1 degradation through the proteasome degradation pathway. Protein prM: Forms heterodimers with envelope protein E in the endoplasmic reticulum and Golgi. In terms of assembly, homodimer; in the endoplasmic reticulum and Golgi. Interacts with protein prM. Interacts with non-structural protein 1. Homodimer; Homohexamer when secreted. Interacts with envelope protein E. As to quaternary structure, interacts (via N-terminus) with serine protease NS3. Non-structural protein 2B: Forms a heterodimer with serine protease NS3. May form homooligomers. In terms of assembly, forms a heterodimer with NS2B. Interacts with NS4B. Interacts with unphosphorylated RNA-directed RNA polymerase NS5; this interaction stimulates RNA-directed RNA polymerase NS5 guanylyltransferase activity. Interacts with host SHFL. Post-translationally, specific enzymatic cleavages in vivo yield mature proteins. Cleavages in the lumen of endoplasmic reticulum are performed by host signal peptidase, wereas cleavages in the cytoplasmic side are performed by the Serine protease NS3. Signal cleavage at the 2K-4B site requires a prior NS3 protease-mediated cleavage at the 4A-2K site. N-glycosylated. The excreted form is glycosylated and this is required for efficient secretion of the protein from infected cells. In terms of processing, N-glycosylated. Post-translationally, specific enzymatic cleavages in vivo yield mature proteins. Cleavages in the lumen of endoplasmic reticulum are performed by host signal peptidase, wereas cleavages in the cytoplasmic side are performed by serine protease NS3. Signal cleavage at the 2K-4B site requires a prior NS3 protease-mediated cleavage at the 4A-2K site.

It localises to the virion membrane. It is found in the host endoplasmic reticulum membrane. The protein resides in the secreted. It catalyses the reaction Selective hydrolysis of -Xaa-Xaa-|-Yaa- bonds in which each of the Xaa can be either Arg or Lys and Yaa can be either Ser or Ala.. It carries out the reaction a ribonucleoside 5'-triphosphate + H2O = a ribonucleoside 5'-diphosphate + phosphate + H(+). The enzyme catalyses ATP + H2O = ADP + phosphate + H(+). Binds to host cell surface receptor and mediates fusion between viral and cellular membranes. Envelope protein is synthesized in the endoplasmic reticulum in the form of heterodimer with protein prM. They play a role in virion budding in the ER, and the newly formed immature particle is covered with 60 spikes composed of heterodimer between precursor prM and envelope protein E. The virion is transported to the Golgi apparatus where the low pH causes dissociation of PrM-E heterodimers and formation of E homodimers. prM-E cleavage is inefficient, and many virions are only partially matured. These uncleaved prM would play a role in immune evasion. In terms of biological role, involved in immune evasion, pathogenesis and viral replication. Once cleaved off the polyprotein, is targeted to three destinations: the viral replication cycle, the plasma membrane and the extracellular compartment. Essential for viral replication. Required for formation of the replication complex and recruitment of other non-structural proteins to the ER-derived membrane structures. Excreted as a hexameric lipoparticle that plays a role against host immune response. Antagonizing the complement function. Binds to the host macrophages and dendritic cells. Inhibits signal transduction originating from Toll-like receptor 3 (TLR3). Its function is as follows. Disrupts the host endothelial glycocalyx layer of host pulmonary microvascular endothelial cells, inducing degradation of sialic acid and shedding of heparan sulfate proteoglycans. NS1 induces expression of sialidases, heparanase, and activates cathepsin L, which activates heparanase via enzymatic cleavage. These effects are probably linked to the endothelial hyperpermeability observed in severe dengue disease. Functionally, component of the viral RNA replication complex that functions in virion assembly and antagonizes the host immune response. Serine protease subunit NS2B: Required cofactor for the serine protease function of NS3. May have membrane-destabilizing activity and form viroporins. In terms of biological role, displays three enzymatic activities: serine protease, NTPase and RNA helicase. NS3 serine protease, in association with NS2B, performs its autocleavage and cleaves the polyprotein at dibasic sites in the cytoplasm: C-prM, NS2A-NS2B, NS2B-NS3, NS3-NS4A, NS4A-2K and NS4B-NS5. NS3 RNA helicase binds RNA and unwinds dsRNA in the 3' to 5' direction. This chain is Genome polyprotein, found in Aedimorphus (Red guenon).